Reading from the N-terminus, the 530-residue chain is Arginine--tRNA ligase (530 aa).

The short motif at 113–123 (ANPTGPLHIGH) is the 'HIGH' region element.

Belongs to the class-I aminoacyl-tRNA synthetase family. As to quaternary structure, monomer.

It localises to the cytoplasm. The enzyme catalyses tRNA(Arg) + L-arginine + ATP = L-arginyl-tRNA(Arg) + AMP + diphosphate. The protein is Arginine--tRNA ligase of Campylobacter jejuni (strain RM1221).